A 667-amino-acid chain; its full sequence is Long-chain-fatty-acid--CoA ligase ACSBG2 (667 aa).

Over residues 1 to 14 the composition is skewed to basic and acidic residues; it reads MTQEKKAEDPDRGM. The interval 1–20 is disordered; that stretch reads MTQEKKAEDPDRGMDTTSAA. Residues 227-235, 418-423, Asp-496, Arg-511, and Arg-624 each bind ATP; these read TSGTTGSPK and EIYGMT.

Belongs to the ATP-dependent AMP-binding enzyme family. Bubblegum subfamily.

Its subcellular location is the cytoplasm. It is found in the membrane. The catalysed reaction is a long-chain fatty acid + ATP + CoA = a long-chain fatty acyl-CoA + AMP + diphosphate. The enzyme catalyses (5Z,8Z,11Z,14Z)-eicosatetraenoate + ATP + CoA = (5Z,8Z,11Z,14Z)-eicosatetraenoyl-CoA + AMP + diphosphate. It catalyses the reaction hexadecanoate + ATP + CoA = hexadecanoyl-CoA + AMP + diphosphate. It carries out the reaction (9Z)-octadecenoate + ATP + CoA = (9Z)-octadecenoyl-CoA + AMP + diphosphate. The catalysed reaction is (9Z,12Z)-octadecadienoate + ATP + CoA = (9Z,12Z)-octadecadienoyl-CoA + AMP + diphosphate. The enzyme catalyses tetracosanoate + ATP + CoA = tetracosanoyl-CoA + AMP + diphosphate. Its function is as follows. Catalyzes the conversion of fatty acids such as long chain and very long-chain fatty acids to their active form acyl-CoAs for both synthesis of cellular lipids, and degradation via beta-oxidation. Can activate diverse saturated, monosaturated and polyunsaturated fatty acids. Has increased ability to activate oleic and linoleic acid. May play a role in spermatogenesis. This chain is Long-chain-fatty-acid--CoA ligase ACSBG2, found in Rattus norvegicus (Rat).